Consider the following 567-residue polypeptide: Oxygen-dependent choline dehydrogenase (567 aa).

4–33 lines the FAD pocket; it reads DYIIIGAGSAGNVLAARLTEDADVTVLLLE. His473 serves as the catalytic Proton acceptor.

This sequence belongs to the GMC oxidoreductase family. FAD is required as a cofactor.

It carries out the reaction choline + A = betaine aldehyde + AH2. The enzyme catalyses betaine aldehyde + NAD(+) + H2O = glycine betaine + NADH + 2 H(+). It functions in the pathway amine and polyamine biosynthesis; betaine biosynthesis via choline pathway; betaine aldehyde from choline (cytochrome c reductase route): step 1/1. Involved in the biosynthesis of the osmoprotectant glycine betaine. Catalyzes the oxidation of choline to betaine aldehyde and betaine aldehyde to glycine betaine at the same rate. In Yersinia pestis (strain Pestoides F), this protein is Oxygen-dependent choline dehydrogenase.